Reading from the N-terminus, the 228-residue chain is UPF0758 protein CLD_1541 (228 aa).

In terms of domain architecture, MPN spans 106 to 228 (KINTPLDVSN…YVSMKEKGTI (123 aa)). Zn(2+) contacts are provided by histidine 177, histidine 179, and aspartate 190. Positions 177–190 (HNHPSGDPTPSKED) match the JAMM motif motif.

The protein belongs to the UPF0758 family.

This is UPF0758 protein CLD_1541 from Clostridium botulinum (strain Okra / Type B1).